The primary structure comprises 309 residues: 5-formyl-3-hydroxy-2-methylpyridine 4-carboxylate 5-dehydrogenase (309 aa).

NAD(+) is bound by residues 12 to 13 (TM), aspartate 32, 87 to 89 (VPE), and lysine 94.

The protein belongs to the 3-hydroxyacyl-CoA dehydrogenase family. In terms of assembly, homodimer.

The catalysed reaction is 5-formyl-3-hydroxy-2-methylpyridine-4-carboxylate + NAD(+) + H2O = 5-hydroxy-6-methylpyridine-3,4-dicarboxylate + NADH + 2 H(+). It carries out the reaction 5-formyl-3-hydroxy-2-methylpyridine-4-carboxylate + NADH + H(+) = 4-pyridoxate + NAD(+). It participates in cofactor degradation; B6 vitamer degradation. Involved in the degradation of pyridoxine (vitamin B(6)). Catalyzes the oxidation of 5-formyl-3-hydroxy-2-methylpyridine-4-carboxylate (FHMPC) by NAD(+) to 5-hydroxy-6-methylpyridine-3,4-dicarboxylate (HMPDC). Can also catalyze the reduction of FHMPC by NADH to 4-pyridoxic acid. This Mesorhizobium japonicum (strain LMG 29417 / CECT 9101 / MAFF 303099) (Mesorhizobium loti (strain MAFF 303099)) protein is 5-formyl-3-hydroxy-2-methylpyridine 4-carboxylate 5-dehydrogenase.